The chain runs to 257 residues: Snake venom serine protease 2C (257 aa).

Residues Met1 to Ala18 form the signal peptide. The propeptide occupies Gln19–Leu24. In terms of domain architecture, Peptidase S1 spans Val25–Ala248. 6 disulfide bridges follow: Cys31–Cys162, Cys49–Cys65, Cys97–Cys255, Cys141–Cys209, Cys173–Cys188, and Cys199–Cys224. Active-site charge relay system residues include His64 and Asp109. N-linked (GlcNAc...) asparagine glycans are attached at residues Asn116, Asn120, and Asn121. The active-site Charge relay system is Ser203.

It belongs to the peptidase S1 family. Snake venom subfamily. Monomer. In terms of tissue distribution, expressed by the venom gland.

It localises to the secreted. Snake venom serine protease that may act in the hemostasis system of the prey. This Craspedocephalus gramineus (Bamboo pit viper) protein is Snake venom serine protease 2C (TLG2C).